The chain runs to 345 residues: D-fructose 1,6-bisphosphatase class 2/sedoheptulose 1,7-bisphosphatase (345 aa).

4 residues coordinate Mn(2+): D33, E57, D97, and E100. Substrate contacts are provided by residues E100–T102, Y131, R176–R178, and D198–D200. E225 contacts Mn(2+).

This sequence belongs to the FBPase class 2 family. Homotetramer. Mn(2+) serves as cofactor.

It catalyses the reaction beta-D-fructose 1,6-bisphosphate + H2O = beta-D-fructose 6-phosphate + phosphate. The catalysed reaction is D-sedoheptulose 1,7-bisphosphate + H2O = D-sedoheptulose 7-phosphate + phosphate. Its pathway is carbohydrate biosynthesis; Calvin cycle. Functionally, catalyzes the hydrolysis of fructose 1,6-bisphosphate (Fru 1,6-P2) and sedoheptulose 1,7-bisphosphate (Sed 1,7-P2) to fructose 6-phosphate and sedoheptulose 7-phosphate, respectively. This chain is D-fructose 1,6-bisphosphatase class 2/sedoheptulose 1,7-bisphosphatase, found in Nostoc sp. (strain PCC 7120 / SAG 25.82 / UTEX 2576).